The sequence spans 475 residues: Cysteine--tRNA ligase (475 aa).

Cysteine 28 contacts Zn(2+). The 'HIGH' region motif lies at 30 to 40 (PTVYDYAHIGN). Residues cysteine 213, histidine 238, and glutamate 242 each contribute to the Zn(2+) site. The 'KMSKS' region signature appears at 270 to 274 (KMSKS). Lysine 273 contributes to the ATP binding site.

It belongs to the class-I aminoacyl-tRNA synthetase family. Monomer. It depends on Zn(2+) as a cofactor.

The protein resides in the cytoplasm. It carries out the reaction tRNA(Cys) + L-cysteine + ATP = L-cysteinyl-tRNA(Cys) + AMP + diphosphate. The protein is Cysteine--tRNA ligase (cysS) of Chlamydia muridarum (strain MoPn / Nigg).